The chain runs to 156 residues: Ribonuclease pancreatic (156 aa).

Positions 1-28 are cleaved as a signal peptide; the sequence is MALEKSLALLPLLVLVLLVLGWVQPSLG. Residues 33 to 43 are compositionally biased toward basic and acidic residues; the sequence is AKKFQRQHMDS. The segment at 33-52 is disordered; sequence AKKFQRQHMDSDGSPSSNPT. Substrate is bound by residues Lys-35 and Arg-38. His-40 functions as the Proton acceptor in the catalytic mechanism. 4 disulfide bridges follow: Cys-54/Cys-112, Cys-68/Cys-123, Cys-86/Cys-138, and Cys-93/Cys-100. The N-linked (GlcNAc...) asparagine glycan is linked to Asn-62. Substrate-binding positions include 69–73, Lys-94, and Arg-113; that span reads KPVNT. Asn-116 is a glycosylation site (N-linked (GlcNAc...) asparagine). The Proton donor role is filled by His-147.

The protein belongs to the pancreatic ribonuclease family. Monomer. Interacts with and forms tight 1:1 complexes with RNH1. Dimerization of two such complexes may occur. Interaction with RNH1 inhibits this protein.

It localises to the secreted. The enzyme catalyses an [RNA] containing cytidine + H2O = an [RNA]-3'-cytidine-3'-phosphate + a 5'-hydroxy-ribonucleotide-3'-[RNA].. It carries out the reaction an [RNA] containing uridine + H2O = an [RNA]-3'-uridine-3'-phosphate + a 5'-hydroxy-ribonucleotide-3'-[RNA].. Endonuclease that catalyzes the cleavage of RNA on the 3' side of pyrimidine nucleotides. Acts on single-stranded and double-stranded RNA. The polypeptide is Ribonuclease pancreatic (RNASE1) (Saimiri sciureus (Common squirrel monkey)).